The primary structure comprises 447 residues: Cytochrome P450 monooxygenase aunB (447 aa).

Cys386 lines the heme pocket.

The protein belongs to the cytochrome P450 family. Requires heme as cofactor.

It carries out the reaction 2 fonsecin B + NADPH + O2 + H(+) = aurasperone B + NADP(+) + 2 H2O. It catalyses the reaction 2 rubrofusarin B + NADPH + O2 + H(+) = aurasperone A + NADP(+) + 2 H2O. It participates in secondary metabolite biosynthesis. Functionally, cytochrome P450 monooxygenase; part of the gene cluster that mediates the biosynthesis of aurasperone B, a dimeric gamma-naphthopyrone. The first step in the biosynthesis of aurasperone B is the production of gamma-naphthopyrone precursor YWA1 by the non-reducing polyketide synthase albA, via condensation of one acetyl-CoA starter unit with 6 malonyl-CoA units. YWA1 is then methylated by aunE at position C-6 to yield foncesin which is further methylated at position C-8 by aunD to produce fonsecin B. A key enzyme in the biosynthetic pathway is the cytochrome P450 monooxygenase aunB which catalyzes the oxidative dimerization of fonsecin B to aurasperone B. AunB also catalyzes the oxidative dimerization of rubrofusarin B into aurasperone A. This chain is Cytochrome P450 monooxygenase aunB, found in Aspergillus niger (strain ATCC MYA-4892 / CBS 513.88 / FGSC A1513).